The chain runs to 643 residues: Arginine--tRNA ligase, mitochondrial (643 aa).

Residues 188–198 (PNIAKPFHAGH) carry the 'HIGH' region motif.

This sequence belongs to the class-I aminoacyl-tRNA synthetase family.

It localises to the mitochondrion matrix. The enzyme catalyses tRNA(Arg) + L-arginine + ATP = L-arginyl-tRNA(Arg) + AMP + diphosphate. This chain is Arginine--tRNA ligase, mitochondrial (MSR1), found in Saccharomyces cerevisiae (strain ATCC 204508 / S288c) (Baker's yeast).